The primary structure comprises 341 residues: Putative ubiquitin-like-specific protease 1B (341 aa).

Catalysis depends on residues histidine 231, aspartate 248, and cysteine 300.

The protein belongs to the peptidase C48 family.

In terms of biological role, protease that catalyzes two essential functions in the SUMO pathway: processing of full-length SUMOs to their mature forms and deconjugation of SUMO from targeted proteins. In Arabidopsis thaliana (Mouse-ear cress), this protein is Putative ubiquitin-like-specific protease 1B (ULP1B).